Consider the following 258-residue polypeptide: Pimeloyl-[acyl-carrier protein] methyl ester esterase (258 aa).

The region spanning 17-241 (VYLIHGWGAN…KAAHAPFLSH (225 aa)) is the AB hydrolase-1 domain. Substrate is bound by residues Trp23, 83 to 84 (SL), and 145 to 149 (FLQLQ). Ser83 acts as the Nucleophile in catalysis. Catalysis depends on residues Asp207 and His235. Position 235 (His235) interacts with substrate.

Belongs to the AB hydrolase superfamily. Carboxylesterase BioH family. As to quaternary structure, monomer.

The protein localises to the cytoplasm. It catalyses the reaction 6-carboxyhexanoyl-[ACP] methyl ester + H2O = 6-carboxyhexanoyl-[ACP] + methanol + H(+). It functions in the pathway cofactor biosynthesis; biotin biosynthesis. Functionally, the physiological role of BioH is to remove the methyl group introduced by BioC when the pimeloyl moiety is complete. It allows to synthesize pimeloyl-ACP via the fatty acid synthetic pathway through the hydrolysis of the ester bonds of pimeloyl-ACP esters. This is Pimeloyl-[acyl-carrier protein] methyl ester esterase from Neisseria meningitidis serogroup B (strain ATCC BAA-335 / MC58).